The primary structure comprises 606 residues: Calmegin (606 aa).

The N-terminal stretch at 1–19 is a signal peptide; the sequence is MRFQGFWLCLGLLFISVNA. The Lumenal segment spans residues 20–466; sequence EFMDDSVEME…QLMSATEQRP (447 aa). K124 is modified (N6-acetyllysine). An intrachain disulfide couples C147 to C181. Residues 255-308 are disordered; the sequence is PPINPPKEIEDPTDEKPDDWDERAKIPDASAVKPEDWDESEPPQIVDSSAVKPD. Tandem repeats lie at residues 263-276, 280-293, 299-312, 318-331, 335-348, 352-365, 366-379, and 380-393. Over residues 265 to 275 the composition is skewed to acidic residues; the sequence is DPTDEKPDDWD. The tract at residues 313-346 is interaction with PPIB; it reads NEPEFIPDPNAEKPFDWNEDMDGEWEAPHISNPA. C347 and C351 are joined by a disulfide. Residues 467 to 487 traverse the membrane as a helical segment; that stretch reads WLWFIYLLTAALPIALIGSFC. The Cytoplasmic portion of the chain corresponds to 488-606; sequence WPRKVKKKYE…SVRKRRVRKE (119 aa). Positions 518–544 are enriched in basic and acidic residues; the sequence is EVKEEKAALEKPVDLEEEKKQSDGEIV. The tract at residues 518–606 is disordered; the sequence is EVKEEKAALE…SVRKRRVRKE (89 aa). The span at 545-567 shows a compositional bias: acidic residues; it reads EKEEEGEPEEKSEEEIEIIEGQE. A phosphoserine mark is found at S556, S572, S575, S577, S587, S590, and S597. The span at 568–579 shows a compositional bias: basic and acidic residues; that stretch reads EGNKSNKSGSED. Positions 597–606 are enriched in basic residues; sequence SVRKRRVRKE.

It belongs to the calreticulin family. As to quaternary structure, interacts with PPIB and PDILT. Interacts with ADAM2.

The protein resides in the endoplasmic reticulum membrane. Functions during spermatogenesis as a chaperone for a range of client proteins that are important for sperm adhesion onto the egg zona pellucida and for subsequent penetration of the zona pellucida. Required for normal sperm migration from the uterus into the oviduct. Required for normal male fertility. Binds calcium ions. This chain is Calmegin (CLGN), found in Bos taurus (Bovine).